Reading from the N-terminus, the 216-residue chain is MOB kinase activator 3C (216 aa).

Zn(2+) contacts are provided by Cys82, Cys87, His164, and His169.

The protein belongs to the MOB1/phocein family.

Its function is as follows. May regulate the activity of kinases. The sequence is that of MOB kinase activator 3C (MOB3C) from Homo sapiens (Human).